Here is a 201-residue protein sequence, read N- to C-terminus: Recombination protein RecR (201 aa).

The segment at 57 to 72 (CKYCSNFGNKDECDIC) adopts a C4-type zinc-finger fold. Residues 80-176 (TKLMIVTTNE…QIYRIGFGIP (97 aa)) enclose the Toprim domain.

This sequence belongs to the RecR family.

May play a role in DNA repair. It seems to be involved in an RecBC-independent recombinational process of DNA repair. It may act with RecF and RecO. The polypeptide is Recombination protein RecR (Ureaplasma urealyticum serovar 10 (strain ATCC 33699 / Western)).